A 341-amino-acid polypeptide reads, in one-letter code: Fructose-1,6-bisphosphatase class 1 1 (341 aa).

Mg(2+)-binding residues include Glu-92, Asp-114, Leu-116, and Asp-117. Residues 117–120 (DGSS), Asn-209, and Lys-275 contribute to the substrate site. A Mg(2+)-binding site is contributed by Glu-281.

The protein belongs to the FBPase class 1 family. Homotetramer. The cofactor is Mg(2+).

It is found in the cytoplasm. It carries out the reaction beta-D-fructose 1,6-bisphosphate + H2O = beta-D-fructose 6-phosphate + phosphate. It functions in the pathway carbohydrate biosynthesis; gluconeogenesis. The protein is Fructose-1,6-bisphosphatase class 1 1 of Leptothrix cholodnii (strain ATCC 51168 / LMG 8142 / SP-6) (Leptothrix discophora (strain SP-6)).